We begin with the raw amino-acid sequence, 461 residues long: Thyroid hormone receptor beta (461 aa).

A disordered region spans residues 1–24 (MTPNSMTENGLPAWDKQKPRPDRG). The segment at 1-106 (MTPNSMTENG…IPSYLDKDEL (106 aa)) is modulating. The span at 15 to 24 (DKQKPRPDRG) shows a compositional bias: basic and acidic residues. Zn(2+)-binding residues include C107, C110, C124, C127, C145, C151, C161, and C164. 2 NR C4-type zinc fingers span residues 107 to 127 (CVVC…CEGC) and 145 to 169 (CKYE…FKKC). The nuclear receptor DNA-binding region spans 107 to 181 (CVVCGDKATG…VGMATDLVLD (75 aa)). Residues 217–461 (EEWELIKTVT…PPLFLEVFED (245 aa)) form the NR LBD domain. The segment at 244-461 (KFLPEDIGQA…PPLFLEVFED (218 aa)) is interaction with NR2F6. 3,3',5-triiodo-L-thyronine-binding residues include R282, N331, and H435. R282, N331, and H435 together coordinate L-thyroxine.

It belongs to the nuclear hormone receptor family. NR1 subfamily. As to quaternary structure, binds DNA as a dimer; homodimer and heterodimer with RXRB. Interacts with the coactivators NCOA1/SRC1, NCOA2/GRIP1, NCOA7 and MED1/TRAP220 in a ligand-inducible manner. Interacts with the corepressor NCOR1 in absence of ligand. Interacts with C1D. Interacts with NR2F6; the interaction impairs the binding of the THRB homodimer and THRB:RXRB heterodimer to T3 response elements. Interacts with PRMT2 and THRSP. Interacts with TACC1; this interaction is decreased in the presence of thyroid hormone T3.

The protein resides in the nucleus. Nuclear hormone receptor that can act as a repressor or activator of transcription. High affinity receptor for thyroid hormones, including triiodothyronine and thyroxine. In Mus musculus (Mouse), this protein is Thyroid hormone receptor beta (Thrb).